Here is a 523-residue protein sequence, read N- to C-terminus: Thiamine pathway transporter THI73 (523 aa).

Topologically, residues 1–79 (MKNMSQRSMD…LSPKVLRKVD (79 aa)) are cytoplasmic. A helical membrane pass occupies residues 80–100 (LFILPFLCCTYLLMFLDKALL). At 101–118 (NYAASMGIKDHLKGNEFS) the chain is on the extracellular side. A helical transmembrane segment spans residues 119–139 (NLGTIFSAAYIFMEPVVTYLI). Topologically, residues 140–141 (QK) are cytoplasmic. A helical transmembrane segment spans residues 142–162 (FPISKILGTFITVWGIVLACH). Over 163 to 176 (AACKTYASLMVVRT) the chain is Extracellular. The helical transmembrane segment at 177-197 (LLGLFESSSAVGCIAISGMYY) threads the bilayer. Topologically, residues 198-207 (TKSEQSARIG) are cytoplasmic. Residues 208–228 (FWATQAGTGYIVGGLISFGFL) form a helical membrane-spanning segment. Over 229–239 (HYHGTAFTSWQ) the chain is Extracellular. Residues 240–260 (IMFLVVGLVTVAFGVLTFLYL) form a helical membrane-spanning segment. The Cytoplasmic portion of the chain corresponds to 261–312 (PDNVTNAWFLNKEEKIQVVEHIRANQTGLETKKFKKQQVKELFLHDKFTWPM). Residues 313 to 333 (LLLTACSQISTGAIGTFSVTI) form a helical membrane-spanning segment. Residues 334-345 (TGTFGFDKYETA) lie on the Extracellular side of the membrane. The helical transmembrane segment at 346–366 (LLQLPIGAITAMIILITTQML) threads the bilayer. The Cytoplasmic segment spans residues 367–371 (SRWGH). A helical membrane pass occupies residues 372 to 392 (ITLITTSMYIPAIIGCIVLIS). Topologically, residues 393–400 (LPLSHKIG) are extracellular. The helical transmembrane segment at 401–421 (NLFSLYLLYSGSCVITNIYIW) threads the bilayer. At 422–432 (NSCNTSGYTKR) the chain is on the cytoplasmic side. Residues 433–452 (VFRNAITMIVYNVSCIIAPQ) form a helical membrane-spanning segment. The Extracellular segment spans residues 453 to 466 (MFRAYSAPRYIPAK). Residues 467 to 487 (IALLVTQCVCVPLQLYIGYIC) traverse the membrane as a helical segment. Residues 488 to 523 (KKENEKRDKEQEGQERKKYQFLDLTDIENRNFRYIY) are Cytoplasmic-facing.

It belongs to the major facilitator superfamily. Allantoate permease family.

The protein localises to the endoplasmic reticulum membrane. Its subcellular location is the cell membrane. Transports either thiamine or, rather, a related metabolite involved in the thiamine biosynthesis pathway. The chain is Thiamine pathway transporter THI73 (THI73) from Saccharomyces cerevisiae (strain ATCC 204508 / S288c) (Baker's yeast).